Here is a 443-residue protein sequence, read N- to C-terminus: Tol-Pal system protein TolB (443 aa).

Residues 1-31 (MMIMTTRTFFSWFIVICAFWLTSFSSVPVHA) form the signal peptide. Residues 422–443 (ERQLPTPNDASDPAWSPLLNIQ) are disordered.

It belongs to the TolB family. As to quaternary structure, the Tol-Pal system is composed of five core proteins: the inner membrane proteins TolA, TolQ and TolR, the periplasmic protein TolB and the outer membrane protein Pal. They form a network linking the inner and outer membranes and the peptidoglycan layer.

Its subcellular location is the periplasm. In terms of biological role, part of the Tol-Pal system, which plays a role in outer membrane invagination during cell division and is important for maintaining outer membrane integrity. This Bartonella henselae (strain ATCC 49882 / DSM 28221 / CCUG 30454 / Houston 1) (Rochalimaea henselae) protein is Tol-Pal system protein TolB.